The primary structure comprises 707 residues: Acyl-CoA ligase 891, peroxisomal (707 aa).

Residue 259-270 (INYTSGTTGPPK) coordinates ATP. The interval 525–549 (DGWFRTGDVCTVDAQGRFIIIDRRK) is fatty acid-binding. A Peroxisome targeting signal motif is present at residues 705–707 (AKL).

This sequence belongs to the ATP-dependent AMP-binding enzyme family.

The protein resides in the peroxisome matrix. The enzyme catalyses (4E,8E)-10-(4-hydroxy-6-methoxy-7-methyl-3-oxo-1,3-dihydro-2-benzofuran-5-yl)-4,8-dimethyldeca-4,8-dienoate + ATP + CoA = (4E,8E)-10-(4-hydroxy-6-methoxy-7-methyl-3-oxo-1,3-dihydro-2-benzofuran-5-yl)-4,8-dimethyldeca-4,8-dienoyl-CoA + AMP + diphosphate. The protein operates within secondary metabolite biosynthesis; terpenoid biosynthesis. In terms of biological role, acyl-CoA ligase involved in the biosynthesis of mycophenolic acid (MPA), the first isolated antibiotic natural product in the world obtained from a culture of Penicillium brevicompactum in 1893. The peroxisomal acyl-CoA ligase 891 converts the intermediate MFDHMP-3C into MFDHMP-3C-CoA which impairs its diffusion from the peroxisome. The first step of the pathway is the synthesis of 5-methylorsellinic acid (5MOA) by the cytosolic polyketide synthase mpaC. 5MOA is then converted to the phthalide compound 5,7-dihydroxy-4,6-dimethylphthalide (DHMP) by the endoplasmic reticulum-bound cytochrome P450 monooxygenase mpaDE. MpaDE first catalyzes hydroxylation of 5-MOA to 4,6-dihydroxy-2-(hydroxymethyl)-3-methylbenzoic acid (DHMB). MpaDE then acts as a lactone synthase that catalyzes the ring closure to convert DHMB into DHMP. The next step is the prenylation of DHMP by the Golgi apparatus-associated prenyltransferase mpaA to yield farnesyl-DHMP (FDHMP). The ER-bound oxygenase mpaB then mediates the oxidative cleavage the C19-C20 double bond in FDHMP to yield FDHMP-3C via a mycophenolic aldehyde intermediate. The O-methyltransferase mpaG catalyzes the methylation of FDHMP-3C to yield MFDHMP-3C. After the cytosolic methylation of FDHMP-3C, MFDHMP-3C enters into peroxisomes probably via free diffusion due to its low molecular weight. Upon a peroxisomal CoA ligation reaction, catalyzed by a beta-oxidation component enzyme acyl-CoA ligase ACL891, MFDHMP-3C-CoA would then be restricted to peroxisomes for the following beta-oxidation pathway steps. The peroxisomal beta-oxidation machinery than converts MFDHMP-3C-CoA into MPA_CoA, via a beta-oxidation chain-shortening process. Finally mpaH acts as a peroxisomal acyl-CoA hydrolase with high substrate specificity toward MPA-CoA to release the final product MPA. The chain is Acyl-CoA ligase 891, peroxisomal from Penicillium brevicompactum.